The following is a 180-amino-acid chain: uncharacterized protein (180 aa).

Positions 3–33 form a coiled coil; the sequence is QQQSNNSNDNKEQLDRVIESLNRVNSETKQI.

This is an uncharacterized protein from Acanthamoeba polyphaga (Amoeba).